A 47-amino-acid chain; its full sequence is Large ribosomal subunit protein bL27c (47 aa).

Residues 1 to 21 form a disordered region; that stretch reads STKNGRDSNAQRLGVKKYGGE.

Belongs to the bacterial ribosomal protein bL27 family.

It is found in the plastid. Its subcellular location is the chloroplast. The polypeptide is Large ribosomal subunit protein bL27c (rpl27) (Porphyridium purpureum (Red alga)).